A 145-amino-acid polypeptide reads, in one-letter code: D-aminoacyl-tRNA deacylase (145 aa).

The Gly-cisPro motif, important for rejection of L-amino acids motif lies at 137–138; that stretch reads GP.

It belongs to the DTD family. In terms of assembly, homodimer.

It localises to the cytoplasm. It catalyses the reaction glycyl-tRNA(Ala) + H2O = tRNA(Ala) + glycine + H(+). The enzyme catalyses a D-aminoacyl-tRNA + H2O = a tRNA + a D-alpha-amino acid + H(+). In terms of biological role, an aminoacyl-tRNA editing enzyme that deacylates mischarged D-aminoacyl-tRNAs. Also deacylates mischarged glycyl-tRNA(Ala), protecting cells against glycine mischarging by AlaRS. Acts via tRNA-based rather than protein-based catalysis; rejects L-amino acids rather than detecting D-amino acids in the active site. By recycling D-aminoacyl-tRNA to D-amino acids and free tRNA molecules, this enzyme counteracts the toxicity associated with the formation of D-aminoacyl-tRNA entities in vivo and helps enforce protein L-homochirality. This Cronobacter sakazakii (strain ATCC BAA-894) (Enterobacter sakazakii) protein is D-aminoacyl-tRNA deacylase.